Reading from the N-terminus, the 265-residue chain is Cytochrome c oxidase subunit 3 (265 aa).

Transmembrane regions (helical) follow at residues Pro-16–Met-36, Gly-41–Trp-61, Tyr-84–Ser-104, Ala-162–Met-182, Phe-200–Val-220, and Trp-245–Ile-265.

The protein belongs to the cytochrome c oxidase subunit 3 family. In terms of assembly, component of the cytochrome c oxidase (complex IV, CIV), a multisubunit enzyme composed of a catalytic core of 3 subunits and several supernumerary subunits. The complex exists as a monomer or a dimer and forms supercomplexes (SCs) in the inner mitochondrial membrane with ubiquinol-cytochrome c oxidoreductase (cytochrome b-c1 complex, complex III, CIII).

It localises to the mitochondrion inner membrane. The enzyme catalyses 4 Fe(II)-[cytochrome c] + O2 + 8 H(+)(in) = 4 Fe(III)-[cytochrome c] + 2 H2O + 4 H(+)(out). Component of the cytochrome c oxidase, the last enzyme in the mitochondrial electron transport chain which drives oxidative phosphorylation. The respiratory chain contains 3 multisubunit complexes succinate dehydrogenase (complex II, CII), ubiquinol-cytochrome c oxidoreductase (cytochrome b-c1 complex, complex III, CIII) and cytochrome c oxidase (complex IV, CIV), that cooperate to transfer electrons derived from NADH and succinate to molecular oxygen, creating an electrochemical gradient over the inner membrane that drives transmembrane transport and the ATP synthase. Cytochrome c oxidase is the component of the respiratory chain that catalyzes the reduction of oxygen to water. Electrons originating from reduced cytochrome c in the intermembrane space (IMS) are transferred via the dinuclear copper A center (CU(A)) of subunit 2 and heme A of subunit 1 to the active site in subunit 1, a binuclear center (BNC) formed by heme A3 and copper B (CU(B)). The BNC reduces molecular oxygen to 2 water molecules using 4 electrons from cytochrome c in the IMS and 4 protons from the mitochondrial matrix. This is Cytochrome c oxidase subunit 3 (COX3) from Aegilops columnaris (Goatgrass).